Here is a 257-residue protein sequence, read N- to C-terminus: UPF0246 protein AHA_3667 (257 aa).

Belongs to the UPF0246 family.

The protein is UPF0246 protein AHA_3667 of Aeromonas hydrophila subsp. hydrophila (strain ATCC 7966 / DSM 30187 / BCRC 13018 / CCUG 14551 / JCM 1027 / KCTC 2358 / NCIMB 9240 / NCTC 8049).